The following is a 184-amino-acid chain: Putative axial regulator YABBY 2 (184 aa).

The C4-type zinc-finger motif lies at 15–42; sequence CSFCTTILAVSVPYASLFTLVTVRCGHC. Composition is skewed to polar residues over residues 76 to 94 and 171 to 184; these read LVTRKDCASSSRSTNNLSE and LDQSVAGQKSNGYY. 2 disordered regions span residues 76-115 and 162-184; these read LVTRKDCASSSRSTNNLSENIDREAPRMPPIRPPEKRQRV and LDGNKKGKQLDQSVAGQKSNGYY.

It belongs to the YABBY family. Interacts with SPL/NZZ and SPEAR2. As to expression, expressed at low levels in abaxial regions of lateral aerial organ primordia leading to cotyledons, leaves, flower meristems, sepals, petals, stamen and carpels, but not in roots.

It localises to the nucleus. Involved in the abaxial cell fate determination during embryogenesis and organogenesis. The chain is Putative axial regulator YABBY 2 (YAB2) from Arabidopsis thaliana (Mouse-ear cress).